Here is a 203-residue protein sequence, read N- to C-terminus: tRNA (pseudouridine(54)-N(1))-methyltransferase (203 aa).

Leucine 125, glycine 146, and cysteine 179 together coordinate S-adenosyl-L-methionine.

This sequence belongs to the methyltransferase superfamily. TrmY family. Homodimer.

The protein localises to the cytoplasm. The catalysed reaction is pseudouridine(54) in tRNA + S-adenosyl-L-methionine = N(1)-methylpseudouridine(54) in tRNA + S-adenosyl-L-homocysteine + H(+). Functionally, specifically catalyzes the N1-methylation of pseudouridine at position 54 (Psi54) in tRNAs. This chain is tRNA (pseudouridine(54)-N(1))-methyltransferase, found in Methanopyrus kandleri (strain AV19 / DSM 6324 / JCM 9639 / NBRC 100938).